The following is a 156-amino-acid chain: Small ribosomal subunit protein uS7 (156 aa).

This sequence belongs to the universal ribosomal protein uS7 family. As to quaternary structure, part of the 30S ribosomal subunit. Contacts proteins S9 and S11.

Its function is as follows. One of the primary rRNA binding proteins, it binds directly to 16S rRNA where it nucleates assembly of the head domain of the 30S subunit. Is located at the subunit interface close to the decoding center, probably blocks exit of the E-site tRNA. This Methylocella silvestris (strain DSM 15510 / CIP 108128 / LMG 27833 / NCIMB 13906 / BL2) protein is Small ribosomal subunit protein uS7.